The sequence spans 454 residues: Mogroside I-E synthase (454 aa).

The active-site Proton acceptor is His-18. His-18 contributes to the an anthocyanidin binding site. Residue Asp-111 is the Charge relay of the active site. His-144 serves as a coordination point for an anthocyanidin. A disulfide bond links Cys-259 and Cys-331. UDP-alpha-D-glucose-binding residues include Ser-278, Cys-331, Gln-333, Trp-351, Asn-352, Ser-353, and Glu-356. An an anthocyanidin-binding site is contributed by Ala-371. UDP-alpha-D-glucose-binding residues include Asp-372 and Gln-373.

It belongs to the UDP-glycosyltransferase family. Highly expressed in young fruits 15 days after anthesis (15-DAA).

It catalyses the reaction mogrol + UDP-alpha-D-glucose = mogroside IE + UDP + H(+). Its pathway is secondary metabolite biosynthesis; terpenoid biosynthesis. Its activity is regulated as follows. Activity is increased by Mg(2+). UDP-glycosyltransferase involved in the biosynthesis of cucurbitacin and mogroside tetracyclic triterpene natural products (e.g. siamenoside I and mogrosides IV, V and VI). Cucurbitacins have cytotoxic properties and exhibit deterrent taste as a defense barrier against herbivores. Mogrosides are nonsugar highly oxygenated compounds used as high-intensity zero-calorie sweeteners; they also possess pharmacological properties such as regulating immunity, lowering blood sugar and lipid levels, protecting the liver, and acting as antioxidants and antitumor agents. Catalyzes the transfer of a glucose moiety to the C-3 hydroxyl of mogrol to form mogroside I-E. Besides mogrol, UGT74AC1 also shows activity in vitro with quercetin and naringenin as substrate. This chain is Mogroside I-E synthase, found in Siraitia grosvenorii (Monk's fruit).